Reading from the N-terminus, the 330-residue chain is Aspartate--ammonia ligase (330 aa).

Belongs to the class-II aminoacyl-tRNA synthetase family. AsnA subfamily.

It localises to the cytoplasm. It carries out the reaction L-aspartate + NH4(+) + ATP = L-asparagine + AMP + diphosphate + H(+). Its pathway is amino-acid biosynthesis; L-asparagine biosynthesis; L-asparagine from L-aspartate (ammonia route): step 1/1. The protein is Aspartate--ammonia ligase of Actinobacillus succinogenes (strain ATCC 55618 / DSM 22257 / CCUG 43843 / 130Z).